The sequence spans 542 residues: MEKEEKSNLIYDKDPGYVWDNKNECEGAAEETYQELNYEPSISADKLTWTPTRLAKTVFNTYEDDDDFNVLCYFTDWSQYDPRIINKEIRDTGGRSADILRLNTPDGRPFKRLIYSFGGLIGDKKYSADGNASIAVRLGVATDPDDAIANHKGKTIPVDPDGAVLASINCGFTKWEAGDANERYNQEKAKGLLGGFRLLHEADKELEFSLSIGGWSMSGLFSEIAKDEILRTNFVEGIKDFFQRFPMFSHLDIDWEYPGSIGAGNPNSPDDGANFAILIQQITDAKISNLKGISIASSADPAKIDAANIPALMDAGVTGINLMTYDFFTLGDGKLSHHTNIYRDPSDVYSKYSIDDAVTHLIDEKKVDPKAIFIGYAGYTRNAKNATITTSIPSEEALKGTYTDANQTLGSFEYSVLEWTDIICHYMDFEKGEGRNGYKLVHDKVAKADYLYSEATKVFISLDTPRSVRDKGRYVKDKGLGGLFIWSGDQDNGILTNAAHEGLKRRIKNKVIDMTPFYLDSDEELPTYTEPAEPQCEACNIK.

The region spanning 68-506 (FNVLCYFTDW…NAAHEGLKRR (439 aa)) is the GH18 domain. Residues 186–187 (QE) and 213–216 (GGWS) contribute to the chitin site. Glutamate 256 acts as the Proton donor in catalysis. Residues tyrosine 257, 323 to 326 (MTYD), and tryptophan 486 contribute to the chitin site.

It belongs to the glycosyl hydrolase 18 family. As to quaternary structure, semipurified toxin complex consists of at least YenA1-YenA2-YenB-YenC1-YenC2-Chi1-Chi2. The Yen-TC:K9 subcomplex is about 26 nm tall and 22 nm in diameter with 5-fold symmetry and 5 copies of YenA1, YenA2, Chi1 and Chi2; the chitinase subunits may be solvent accessible on the exterior the complex. The Yen-TC:K9 subcomplex has no insecticidal activity. The native complex with additional YenB, YenC1 and YenC2 subunits is 16 nm taller and is insecticidal; the toxicity-conferring subunits are present at about 1 copy each.

The protein resides in the secreted. It catalyses the reaction Random endo-hydrolysis of N-acetyl-beta-D-glucosaminide (1-&gt;4)-beta-linkages in chitin and chitodextrins.. Toxin complex is secreted when grown at 25 degrees Celsius or less; at higher temperatures the proteins are present intracellularly but not secreted. Functionally, part of an orally active toxin complex (TC) with strong insecticidal effects on larvae of the Coleoptera Costelytra zealandica, Acrossidius tasmania and Adoryphorus couloni and some Lepidoptera larvae. The TC has an endochitinase activity. This subunit might aid infection by degradation of the larval peritrophic membrane. The sequence is that of Chitinase 1 from Yersinia entomophaga.